We begin with the raw amino-acid sequence, 241 residues long: Octanoyltransferase (241 aa).

In terms of domain architecture, BPL/LPL catalytic spans 49–233 (GEASELVWLL…AFGEVFGPSE (185 aa)). Substrate is bound by residues 87-94 (RGGQVTYH), 162-164 (AIG), and 175-177 (GIS). C193 acts as the Acyl-thioester intermediate in catalysis.

It belongs to the LipB family.

Its subcellular location is the cytoplasm. It carries out the reaction octanoyl-[ACP] + L-lysyl-[protein] = N(6)-octanoyl-L-lysyl-[protein] + holo-[ACP] + H(+). It participates in protein modification; protein lipoylation via endogenous pathway; protein N(6)-(lipoyl)lysine from octanoyl-[acyl-carrier-protein]: step 1/2. Catalyzes the transfer of endogenously produced octanoic acid from octanoyl-acyl-carrier-protein onto the lipoyl domains of lipoate-dependent enzymes. Lipoyl-ACP can also act as a substrate although octanoyl-ACP is likely to be the physiological substrate. In Nitrobacter hamburgensis (strain DSM 10229 / NCIMB 13809 / X14), this protein is Octanoyltransferase.